The chain runs to 80 residues: Phosphoribosylformylglycinamidine synthase subunit PurS (80 aa).

This sequence belongs to the PurS family. In terms of assembly, homodimer. Part of the FGAM synthase complex composed of 1 PurL, 1 PurQ and 2 PurS subunits.

It localises to the cytoplasm. It carries out the reaction N(2)-formyl-N(1)-(5-phospho-beta-D-ribosyl)glycinamide + L-glutamine + ATP + H2O = 2-formamido-N(1)-(5-O-phospho-beta-D-ribosyl)acetamidine + L-glutamate + ADP + phosphate + H(+). The protein operates within purine metabolism; IMP biosynthesis via de novo pathway; 5-amino-1-(5-phospho-D-ribosyl)imidazole from N(2)-formyl-N(1)-(5-phospho-D-ribosyl)glycinamide: step 1/2. Part of the phosphoribosylformylglycinamidine synthase complex involved in the purines biosynthetic pathway. Catalyzes the ATP-dependent conversion of formylglycinamide ribonucleotide (FGAR) and glutamine to yield formylglycinamidine ribonucleotide (FGAM) and glutamate. The FGAM synthase complex is composed of three subunits. PurQ produces an ammonia molecule by converting glutamine to glutamate. PurL transfers the ammonia molecule to FGAR to form FGAM in an ATP-dependent manner. PurS interacts with PurQ and PurL and is thought to assist in the transfer of the ammonia molecule from PurQ to PurL. This chain is Phosphoribosylformylglycinamidine synthase subunit PurS, found in Archaeoglobus fulgidus (strain ATCC 49558 / DSM 4304 / JCM 9628 / NBRC 100126 / VC-16).